Here is a 217-residue protein sequence, read N- to C-terminus: Pro-Pro endopeptidase (217 aa).

An N-terminal signal peptide occupies residues 1–27; that stretch reads MKWDKRVVALILAVMIVCPLFAAPAHA. In terms of domain architecture, ATLF-like spans 30–216; sequence QSILDKLVVL…TYEFMAKLFA (187 aa). Residues 112-115 are plays a crucial role in substrate specificity; it reads SERV. Histidine 137 is a Zn(2+) binding site. Glutamate 138 acts as the Proton acceptor in catalysis. Residues histidine 141, tyrosine 174, and glutamate 181 each contribute to the Zn(2+) site.

It belongs to the peptidase M34 family. Pro-Pro endopeptidase subfamily. As to quaternary structure, monomer. Zn(2+) is required as a cofactor.

It is found in the secreted. It catalyses the reaction The enzyme catalyzes the hydrolytic cleavage of peptide bonds between two proline residues.. Its function is as follows. Zinc-dependent endoprotease with a unique preference for proline residues surrounding the scissile bond, which cleaves in a PLP-|-PVP motif. Cleaves the cell surface protein encoded by an adjacent gene, which contains two PPEP-2 cleaving sites and putative extracellular matrix-binding domains. Thereby, may have a role in the regulation of P.alvei adhesion. Is not able to cleave within the PVP-|-PVQ motif, and only shows a very poor cleavage of the VNP-|-PVP motif in vitro, which is the optimal substrate peptide for PPEP-1 from P.difficile. The sequence is that of Pro-Pro endopeptidase from Paenibacillus alvei (strain ATCC 6344 / DSM 29 / NBRC 3343 / NCIMB 9371 / NCTC 6352) (Bacillus alvei).